The following is a 194-amino-acid chain: NAD(P)H:quinone oxidoreductase (194 aa).

This sequence belongs to the SsuE family. As to quaternary structure, homotetramer. It depends on FMN as a cofactor.

The catalysed reaction is a quinone + NADH + H(+) = a quinol + NAD(+). The enzyme catalyses a quinone + NADPH + H(+) = a quinol + NADP(+). In terms of biological role, the enzyme apparently serves as a quinone reductase in connection with conjugation reactions of hydroquinones involved in detoxification pathways. This is NAD(P)H:quinone oxidoreductase from Solanum tuberosum (Potato).